A 699-amino-acid chain; its full sequence is SPX domain-containing membrane protein At4g22990 (699 aa).

Residues 2 to 145 enclose the SPX domain; sequence VAFGKKLKER…GYRFTNYYVK (144 aa). The next 6 helical transmembrane spans lie at 249-269, 280-300, 317-337, 339-358, 377-397, and 413-433; these read FMSLLLNLVNTFLYMVNTYII, LGAAATVCGVVIGAMAVAQLF, LIFSSIVLFIGNLLYALAFDF, SIAVLLIGRLFCGLGSARAV, AGFVSASALGMACGPALAGLL, and LPGWVMAVAWLIYLVWLAISF. Acidic residues predominate over residues 475–490; that stretch reads IEEQGEDECDGSEEAS. A disordered region spans residues 475-494; the sequence is IEEQGEDECDGSEEASEDSR. 5 helical membrane-spanning segments follow: residues 515-535, 546-566, 578-598, 606-626, and 671-691; these read LLIYFMLKYAMEILLSESSVI, SVAIFLFCLGLTVLPVNLVVG, ILLVSEIMVCVGILLSFHVVV, VCSGLIMFVSAEVLEGVNLSL, and MLLNVTLLPSLVICVLSIVAT.

The protein belongs to the major facilitator superfamily.

The protein localises to the membrane. The polypeptide is SPX domain-containing membrane protein At4g22990 (Arabidopsis thaliana (Mouse-ear cress)).